The chain runs to 688 residues: UvrABC system protein C (688 aa).

Positions 11–90 constitute a GIY-YIG domain; it reads LTPGVYLYKD…IKKHRPRYNI (80 aa). The region spanning 200–235 is the UVR domain; that stretch reads GELVDALRTEMEAASQGLDFERAAVLRDRIRALERT.

It belongs to the UvrC family. Interacts with UvrB in an incision complex.

The protein localises to the cytoplasm. The UvrABC repair system catalyzes the recognition and processing of DNA lesions. UvrC both incises the 5' and 3' sides of the lesion. The N-terminal half is responsible for the 3' incision and the C-terminal half is responsible for the 5' incision. This is UvrABC system protein C from Nitratidesulfovibrio vulgaris (strain ATCC 29579 / DSM 644 / CCUG 34227 / NCIMB 8303 / VKM B-1760 / Hildenborough) (Desulfovibrio vulgaris).